The chain runs to 143 residues: FIS1-related protein fis-1 (143 aa).

The chain crosses the membrane as a helical span at residues 121–141 (LGLLGGAVAVVGGLVIAGLAF).

This sequence belongs to the FIS1 family.

It localises to the mitochondrion outer membrane. Its subcellular location is the peroxisome membrane. In terms of biological role, involved in the fragmentation of the mitochondrial network. Involved in perinuclear clustering of the mitochondrial network. Plays a role in removal of ultraviolet C radiation-induced mitochondrial DNA damage. May act, redundantly with fis-2, downstream of mitochondrial fission, before the fission products participate in either mitochondrial homeostasis, mitophagy, or apoptosis. The sequence is that of FIS1-related protein fis-1 from Caenorhabditis elegans.